A 232-amino-acid polypeptide reads, in one-letter code: Putative ABC transporter ATP-binding protein VNG_2317G (232 aa).

Positions L2–P231 constitute an ABC transporter domain. G34 to T41 is an ATP binding site.

Belongs to the ABC transporter superfamily.

It is found in the cell membrane. Probably part of an ABC transporter complex. Responsible for energy coupling to the transport system. The protein is Putative ABC transporter ATP-binding protein VNG_2317G of Halobacterium salinarum (strain ATCC 700922 / JCM 11081 / NRC-1) (Halobacterium halobium).